The sequence spans 1616 residues: MPARTAPARVPTLAVPAISLPDDVRRRLKDLERDSLTEKECVKEKLNLLHEFLQTEIKNQLCDLETKLRKEELSEEGYLAKVKSLLNKDLSLENGAHAYNREVNGRLENGNQARSEARRVGMADANSPPKPLSKPRTPRRSKSDGEAKPEPSPSPRITRKSTRQTTITSHFAKGPAKRKPQEESERAKSDESIKEEDKDQDEKRRRVTSRERVARPLPAEEPERAKSGTRTEKEEERDEKEEKRLRSQTKEPTPKQKLKEEPDREARAGVQADEDEDGDEKDEKKHRSQPKDLAAKRRPEEKEPEKVNPQISDEKDEDEKEEKRRKTTPKEPTEKKMARAKTVMNSKTHPPKCIQCGQYLDDPDLKYGQHPPDAVDEPQMLTNEKLSIFDANESGFESYEALPQHKLTCFSVYCKHGHLCPIDTGLIEKNIELFFSGSAKPIYDDDPSLEGGVNGKNLGPINEWWITGFDGGEKALIGFSTSFAEYILMDPSPEYAPIFGLMQEKIYISKIVVEFLQSNSDSTYEDLINKIETTVPPSGLNLNRFTEDSLLRHAQFVVEQVESYDEAGDSDEQPIFLTPCMRDLIKLAGVTLGQRRAQARRQTIRHSTREKDRGPTKATTTKLVYQIFDTFFAEQIEKDDREDKENAFKRRRCGVCEVCQQPECGKCKACKDMVKFGGSGRSKQACQERRCPNMAMKEADDDEEVDDNIPEMPSPKKMHQGKKKKQNKNRISWVGEAVKTDGKKSYYKKVCIDAETLEVGDCVSVIPDDSSKPLYLARVTALWEDSSNGQMFHAHWFCAGTDTVLGATSDPLELFLVDECEDMQLSYIHSKVKVIYKAPSENWAMEGGMDPESLLEGDDGKTYFYQLWYDQDYARFESPPKTQPTEDNKFKFCVSCARLAEMRQKEIPRVLEQLEDLDSRVLYYSATKNGILYRVGDGVYLPPEAFTFNIKLSSPVKRPRKEPVDEDLYPEHYRKYSDYIKGSNLDAPEPYRIGRIKEIFCPKKSNGRPNETDIKIRVNKFYRPENTHKSTPASYHADINLLYWSDEEAVVDFKAVQGRCTVEYGEDLPECVQVYSMGGPNRFYFLEAYNAKSKSFEDPPNHARSPGNKGKGKGKGKGKPKSQACEPSEPEIEIKLPKLRTLDVFSGCGGLSEGFHQAGISDTLWAIEMWDPAAQAFRLNNPGSTVFTEDCNILLKLVMAGETTNSRGQRLPQKGDVEMLCGGPPCQGFSGMNRFNSRTYSKFKNSLVVSFLSYCDYYRPRFFLLENVRNFVSFKRSMVLKLTLRCLVRMGYQCTFGVLQAGQYGVAQTRRRAIILAAAPGEKLPLFPEPLHVFAPRACQLSVVVDDKKFVSNITRLSSGPFRTITVRDTMSDLPEVRNGASALEISYNGEPQSWFQRQLRGAQYQPILRDHICKDMSALVAARMRHIPLAPGSDWRDLPNIEVRLSDGTMARKLRYTHHDRKNGRSSSGALRGVCSCVEAGKACDPAARQFNTLIPWCLPHTGNRHNHWAGLYGRLEWDGFFSTTVTNPEPMGKQGRVLHPEQHRVVSVRECARSQGFPDTYRLFGNILDKHRQVGNAVPPPLAKAIGLEIKLCMLAKARESASAKIKEEEAAKD.

Positions 1 to 120 (MPARTAPARV…NQARSEARRV (120 aa)) are interaction with DMAP1. The interval 1–148 (MPARTAPARV…RRSKSDGEAK (148 aa)) is interaction with DNMT3A. Interaction with the PRC2/EED-EZH2 complex regions lie at residues 1-336 (MPAR…TEKK) and 308-606 (NPQI…TIRH). Residues 16-109 (PAISLPDDVR…NREVNGRLEN (94 aa)) enclose the DMAP1-binding domain. K70 bears the N6,N6-dimethyllysine mark. The tract at residues 103–349 (VNGRLENGNQ…AKTVMNSKTH (247 aa)) is disordered. Residues S127 and S133 each carry the phosphoserine modification. The residue at position 137 (T137) is a Phosphothreonine. Phosphoserine is present on S141. An N6-methyllysine; by SETD7 modification is found at K142. The residue at position 143 (S143) is a Phosphoserine; by PKB/AKT1. Positions 149-217 (PEPSPSPRIT…TSRERVARPL (69 aa)) are interaction with DNMT3B. 2 positions are modified to phosphoserine: S152 and S154. K160 is modified (N6-acetyllysine). The interaction with PCNA stretch occupies residues 163–174 (RQTTITSHFAKG). T166 bears the Phosphothreonine mark. 2 positions are modified to N6-acetyllysine: K173 and K188. Residues 177–205 (KRKPQEESERAKSDESIKEEDKDQDEKRR) carry the Nuclear localization signal motif. 3 stretches are compositionally biased toward basic and acidic residues: residues 179–214 (KPQE…ERVA), 221–267 (EPER…REAR), and 281–306 (KDEK…EPEK). K259 carries the N6-acetyllysine; alternate modification. K259 participates in a covalent cross-link: Glycyl lysine isopeptide (Lys-Gly) (interchain with G-Cter in SUMO2); alternate. A homodimerization region spans residues 310-502 (QISDEKDEDE…PEYAPIFGLM (193 aa)). Position 312 is a phosphoserine (S312). Over residues 321–337 (EEKRRKTTPKEPTEKKM) the composition is skewed to basic and acidic residues. The interval 331–550 (EPTEKKMARA…NLNRFTEDSL (220 aa)) is DNA replication foci-targeting sequence. C353 and C356 together coordinate Zn(2+). N6-acetyllysine is present on K366. Phosphoserine is present on residues S394 and S398. Zn(2+)-binding residues include C414 and H418. 2 positions are modified to phosphoserine: S509 and S549. The CXXC-type zinc-finger motif lies at 646 to 692 (NAFKRRRCGVCEVCQQPECGKCKACKDMVKFGGSGRSKQACQERRCP). The interval 651–697 (RRCGVCEVCQQPECGKCKACKDMVKFGGSGRSKQACQERRCPNMAMK) is required for activity. The Zn(2+) site is built by C653, C656, C659, C664, C667, C670, C686, and C691. The interval 693–754 (NMAMKEADDD…SYYKKVCIDA (62 aa)) is autoinhibitory linker. Positions 699-709 (ADDDEEVDDNI) are enriched in acidic residues. The interval 699–729 (ADDDEEVDDNIPEMPSPKKMHQGKKKKQNKN) is disordered. Residue S714 is modified to Phosphoserine. The span at 716–728 (KKMHQGKKKKQNK) shows a compositional bias: basic residues. At S732 the chain carries Phosphoserine. K749 is modified (N6-acetyllysine). Positions 755-880 (ETLEVGDCVS…QDYARFESPP (126 aa)) constitute a BAH 1 domain. Phosphoserine is present on S878. N6-acetyllysine is present on residues K891, K957, K961, K975, and K1054. Residues 972 to 1100 (HYRKYSDYIK…AKSKSFEDPP (129 aa)) enclose the BAH 2 domain. The tract at residues 1095–1130 (SFEDPPNHARSPGNKGKGKGKGKGKPKSQACEPSEP) is disordered. 5 consecutive repeat copies span residues 1109-1110 (KG), 1111-1112 (KG), 1113-1114 (KG), 1115-1116 (KG), and 1117-1118 (KG). Residues 1109-1120 (KGKGKGKGKGKP) are 6 X 2 AA tandem repeats of K-G. Residues 1110-1120 (GKGKGKGKGKP) are compositionally biased toward basic residues. K1111, K1113, and K1115 each carry N6-acetyllysine. N6-acetyllysine; by EHMT2 is present on K1117. An N6-acetyllysine mark is found at K1119 and K1121. A 6; approximate repeat occupies 1119–1120 (KP). Positions 1121–1616 (KSQACEPSEP…KIKEEEAAKD (496 aa)) are interaction with the PRC2/EED-EZH2 complex. An SAM-dependent MTase C5-type domain is found at 1139–1599 (LRTLDVFSGC…LEIKLCMLAK (461 aa)). The catalytic stretch occupies residues 1139–1616 (LRTLDVFSGC…KIKEEEAAKD (478 aa)). S-adenosyl-L-methionine is bound by residues S1146, 1150–1151 (GL), 1168–1169 (EM), 1190–1191 (DC), and C1191. C1226 is a catalytic residue. 2 positions are modified to N6-acetyllysine: K1349 and K1415. Positions 1578 and 1580 each coordinate S-adenosyl-L-methionine. K1609 is covalently cross-linked (Glycyl lysine isopeptide (Lys-Gly) (interchain with G-Cter in SUMO2)).

The protein belongs to the class I-like SAM-binding methyltransferase superfamily. C5-methyltransferase family. As to quaternary structure, homodimer. Forms a stable complex with E2F1, BB1 and HDAC1. Forms a complex with DMAP1 and HDAC2, with direct interaction. Interacts with the PRC2/EED-EZH2 complex. Probably part of a corepressor complex containing ZNF304, TRIM28, SETDB1 and DNMT1. Interacts with UHRF1; promoting its recruitment to hemimethylated DNA. Interacts with USP7, promoting its deubiquitination. Interacts with PCNA. Interacts with MBD2 and MBD3. Interacts with DNMT3A and DNMT3B. Interacts with UBC9. Interacts with CSNK1D. Interacts with HDAC1. Interacts with BAZ2A/TIP5. Interacts with SIRT7. Interacts with ZNF263; recruited to the SIX3 promoter along with other proteins involved in chromatin modification and transcriptional corepression where it contributes to transcriptional repression. Interacts with L3MBTL3 and DCAF5; the interaction requires DNMT1 methylation at Lys-142 and is necessary to target DNMT1 for ubiquitination by the CRL4-DCAF5 E3 ubiquitin ligase complex and proteasomal degradation. Interacts with PHF20L1; the interaction requires DNMT1 methylation at Lys-142 and protects DNMT1 from ubiquitination and proteasomal degradation. Post-translationally, sumoylated; sumoylation increases activity. In terms of processing, acetylation on multiple lysines, mainly by KAT2B/PCAF, regulates cell cycle G(2)/M transition. Deacetylation of Lys-1349 and Lys-1415 by SIRT1 increases methyltransferase activity. Phosphorylation of Ser-154 by CDKs is important for enzymatic activity and protein stability. Phosphorylation of Ser-143 by AKT1 prevents methylation by SETD7 thereby increasing DNMT1 stability. Post-translationally, methylation at Lys-142 by SETD7 is necessary for the regulation of DNMT1 proteasomal degradation. In terms of processing, ubiquitinated by UHRF1; interaction with USP7 counteracts ubiquitination by UHRF1 by promoting deubiquitination and preventing degradation by the proteasome. As to expression, ubiquitous; highly expressed in fetal tissues, heart, kidney, placenta, peripheral blood mononuclear cells, and expressed at lower levels in spleen, lung, brain, small intestine, colon, liver, and skeletal muscle. Isoform 2 is less expressed than isoform 1.

It localises to the nucleus. It carries out the reaction a 2'-deoxycytidine in DNA + S-adenosyl-L-methionine = a 5-methyl-2'-deoxycytidine in DNA + S-adenosyl-L-homocysteine + H(+). In terms of biological role, methylates CpG residues. Preferentially methylates hemimethylated DNA. Associates with DNA replication sites in S phase maintaining the methylation pattern in the newly synthesized strand, that is essential for epigenetic inheritance. Associates with chromatin during G2 and M phases to maintain DNA methylation independently of replication. It is responsible for maintaining methylation patterns established in development. DNA methylation is coordinated with methylation of histones. Mediates transcriptional repression by direct binding to HDAC2. In association with DNMT3B and via the recruitment of CTCFL/BORIS, involved in activation of BAG1 gene expression by modulating dimethylation of promoter histone H3 at H3K4 and H3K9. Probably forms a corepressor complex required for activated KRAS-mediated promoter hypermethylation and transcriptional silencing of tumor suppressor genes (TSGs) or other tumor-related genes in colorectal cancer (CRC) cells. Also required to maintain a transcriptionally repressive state of genes in undifferentiated embryonic stem cells (ESCs). Associates at promoter regions of tumor suppressor genes (TSGs) leading to their gene silencing. Promotes tumor growth. This chain is DNA (cytosine-5)-methyltransferase 1 (DNMT1), found in Homo sapiens (Human).